A 412-amino-acid polypeptide reads, in one-letter code: MISQIDKTELLERFLHYVSFHTQSKPNAKHSPSSVGQMKLAMQLQKELIQLGLENVEVSKYAVVTAFLPANDPNLTKTIGLVAHLDTSPQCSGKNVRPEVIEEYRGGDIALGIGEEFISPVYYSFMQKLVGQTLIVTDGTTLLGADNKAGIAEIMTALSILQKENIPHCNIRVAFTPDEEIGLGIHYFPMEKFSCDWAYTIDGGEVGELEYENFNAATAKVRFFGRNIHTGYAKGKMLNALTLACEFQQVFPVDEVPEKTDGKVGFYHLEDFSGDIEQVELTYLIRDFDEQNFAQRKAFIKNQVEKFNAKKGLKKPIELEIQDSYQNMYDVVKNVPQSIELADRAMKAVGIKPNHKPIRGGTDGAFLASKGLACPNIFTGGYNFHSKHELVSLQGMENTVQVIIEMLKCKDL.

Histidine 84 contacts Zn(2+). Aspartate 86 is an active-site residue. Residue aspartate 146 participates in Zn(2+) binding. Glutamate 179 functions as the Proton acceptor in the catalytic mechanism. Zn(2+) is bound by residues glutamate 180, aspartate 202, and histidine 385.

It belongs to the peptidase M20B family. Zn(2+) is required as a cofactor.

It is found in the cytoplasm. The enzyme catalyses Release of the N-terminal residue from a tripeptide.. Its function is as follows. Cleaves the N-terminal amino acid of tripeptides. In Haemophilus influenzae (strain ATCC 51907 / DSM 11121 / KW20 / Rd), this protein is Peptidase T.